Here is a 209-residue protein sequence, read N- to C-terminus: Chaperone protein TorD (209 aa).

Belongs to the TorD/DmsD family. TorD subfamily.

The protein resides in the cytoplasm. Involved in the biogenesis of TorA. Acts on TorA before the insertion of the molybdenum cofactor and, as a result, probably favors a conformation of the apoenzyme that is competent for acquiring the cofactor. The sequence is that of Chaperone protein TorD from Shewanella baltica (strain OS155 / ATCC BAA-1091).